We begin with the raw amino-acid sequence, 339 residues long: D-erythrose-4-phosphate dehydrogenase (339 aa).

12-13 (RI) contributes to the NAD(+) binding site. Substrate contacts are provided by residues 154 to 156 (SCT), Arg200, 213 to 214 (TK), and Arg236. The active-site Nucleophile is the Cys155. Asn318 lines the NAD(+) pocket.

The protein belongs to the glyceraldehyde-3-phosphate dehydrogenase family. Epd subfamily. As to quaternary structure, homotetramer.

The protein resides in the cytoplasm. It carries out the reaction D-erythrose 4-phosphate + NAD(+) + H2O = 4-phospho-D-erythronate + NADH + 2 H(+). It participates in cofactor biosynthesis; pyridoxine 5'-phosphate biosynthesis; pyridoxine 5'-phosphate from D-erythrose 4-phosphate: step 1/5. Catalyzes the NAD-dependent conversion of D-erythrose 4-phosphate to 4-phosphoerythronate. The sequence is that of D-erythrose-4-phosphate dehydrogenase from Proteus mirabilis (strain HI4320).